The following is an 869-amino-acid chain: Dynamin-3 (869 aa).

One can recognise a Dynamin-type G domain in the interval L28–P294. The interval G38–S45 is G1 motif. Position 38–46 (G38–S46) interacts with GTP. A G2 motif region spans residues V64–R66. A G3 motif region spans residues D136–G139. The tract at residues T205–D208 is G4 motif. T205 to D211 is a binding site for GTP. At Y231 the chain carries Phosphotyrosine. Residues V235 to S238 form a G5 motif region. GTP is bound at residue N236–Q239. N6-acetyllysine is present on K299. In terms of domain architecture, PH spans Q515–S621. Position 603 is a phosphotyrosine (Y603). K604 is modified (N6-acetyllysine). Positions V659 to V750 constitute a GED domain. The segment at T747–D869 is disordered. Residues S769 and S773 each carry the phosphoserine modification. 2 stretches are compositionally biased toward pro residues: residues P797–P822 and P832–T855. S853 bears the Phosphoserine mark.

It belongs to the TRAFAC class dynamin-like GTPase superfamily. Dynamin/Fzo/YdjA family.

The protein resides in the cytoplasm. It is found in the cytoskeleton. The catalysed reaction is GTP + H2O = GDP + phosphate + H(+). Its function is as follows. Microtubule-associated force-producing protein involved in producing microtubule bundles and able to bind and hydrolyze GTP. Most probably involved in vesicular trafficking processes, in particular endocytosis. This is Dynamin-3 (DNM3) from Homo sapiens (Human).